Here is a 576-residue protein sequence, read N- to C-terminus: Proline--tRNA ligase (576 aa).

The protein belongs to the class-II aminoacyl-tRNA synthetase family. ProS type 1 subfamily. Homodimer.

The protein localises to the cytoplasm. The enzyme catalyses tRNA(Pro) + L-proline + ATP = L-prolyl-tRNA(Pro) + AMP + diphosphate. In terms of biological role, catalyzes the attachment of proline to tRNA(Pro) in a two-step reaction: proline is first activated by ATP to form Pro-AMP and then transferred to the acceptor end of tRNA(Pro). As ProRS can inadvertently accommodate and process non-cognate amino acids such as alanine and cysteine, to avoid such errors it has two additional distinct editing activities against alanine. One activity is designated as 'pretransfer' editing and involves the tRNA(Pro)-independent hydrolysis of activated Ala-AMP. The other activity is designated 'posttransfer' editing and involves deacylation of mischarged Ala-tRNA(Pro). The misacylated Cys-tRNA(Pro) is not edited by ProRS. This is Proline--tRNA ligase from Leptospira interrogans serogroup Icterohaemorrhagiae serovar Lai (strain 56601).